Here is a 430-residue protein sequence, read N- to C-terminus: Glucose-6-phosphate isomerase (430 aa).

E284 (proton donor) is an active-site residue. Active-site residues include H305 and K420.

The protein belongs to the GPI family.

The protein resides in the cytoplasm. It carries out the reaction alpha-D-glucose 6-phosphate = beta-D-fructose 6-phosphate. It functions in the pathway carbohydrate biosynthesis; gluconeogenesis. Its pathway is carbohydrate degradation; glycolysis; D-glyceraldehyde 3-phosphate and glycerone phosphate from D-glucose: step 2/4. Functionally, catalyzes the reversible isomerization of glucose-6-phosphate to fructose-6-phosphate. The sequence is that of Glucose-6-phosphate isomerase from Mycoplasma pneumoniae (strain ATCC 29342 / M129 / Subtype 1) (Mycoplasmoides pneumoniae).